The primary structure comprises 525 residues: Histidine-rich glycoprotein (525 aa).

Residues 1 to 18 form the signal peptide; it reads MKVLTTALLLVTLQCSHA. In terms of domain architecture, Cystatin 1 spans 19–122; sequence LSPTNCDASK…ESQDLSVNGY (104 aa). Cystine bridges form between C24–C504, C78–C89, C103–C124, C201–C414, and C216–C239. Residues 41 to 84 form an interaction with ATP5F1A region; it reads GRRSGYTFQLLRVSDAHLDRVETATIYYLVLDVVESDCWVLSTK. 2 N-linked (GlcNAc...) asparagine glycosylation sites follow: N112 and N123. The region spanning 135-240 is the Cystatin 2 domain; sequence NTKDSPVLVD…TPEYTDLICE (106 aa). The residue at position 145 (S145) is a Phosphoserine. N200 carries N-linked (GlcNAc...) asparagine glycosylation. Residues 275-445 are disordered; the sequence is RDHHHTHKTH…GHSRKRGPGK (171 aa). N-linked (GlcNAc...) asparagine glycosylation is found at N322 and N330. 2 stretches are compositionally biased toward basic residues: residues 339-392 and 426-443; these read HGQH…HGHH and QYHR…KRGP. S438 is modified (phosphoserine).

Interacts with THBS1 (via the TSP type I repeats); the interaction blocks the antiangiogenic effect of THBS1 with CD36. Interacts with HPSE; the interaction is enhanced at acidic pH, partially inhibits binding of HPSE to cell surface receptors and modulates its enzymatic activity. Interacts (via the HRR domain) with TMP1; the interaction partially mediates the antiangiogenic properties of HRG. Interacts with kappa and lambda light chains of IgG molecules. Interacts with ATP5F1A; the interaction occurs on the surface of T-cells and alters their cell morphology in concert with CONA. Binds IgG molecules containing kappa and lambda light chains and inhibits the formation of insoluble immunoglobulin complexes. Interacts with F12; the interaction, which is enhanced in the presence of zinc ions and inhibited by heparin-binding to HRG, inhibits factor XII autoactivation and contact-initiated coagulation. Interacts with PLG (via its Kringle domains); the interaction tethers PLG to the cell surface and enhances its activation. Interacts (via the HRR domain) with TPM1; the interaction appears to contribute to the antiangiogenic properties of the HRR domain. Interacts with THBS2; the interaction blocks the antiangiogenic effect of THBS2 with CD36. Post-translationally, N-glycosylated. Proteolytic cleavage produces several HRG fragments which are mostly disulfide-linked and, therefore, not released. Cleavage by plasmin is inhibited in the presence of heparin, zinc ions or in an acidic environment. Cleavage reduces binding of HRG to heparan sulfate, but enhances the ability of HRG to bind and tether plasminogen to the cell surface. On platelet activation, releases a 33 kDa antiangiogenic peptide which encompasses the HRR. Also cleaved in the C-terminal by plasmin. As to expression, expressed in liver, blood plasma, serum and in platelets. Also present in fibrin clots, wound fluid from acute wounds and chronic leg ulcers.

It localises to the secreted. Its function is as follows. Plasma glycoprotein that binds a number of ligands such as heme, heparin, heparan sulfate, thrombospondin, plasminogen, and divalent metal ions. Inhibits rosette formation. Acts as an adapter protein and implicated in regulating many processes such as immune complex and pathogen clearance, cell adhesion, angiogenesis, coagulation and fibrinolysis. Mediates clearance of necrotic cells through enhancing the phagocytosis of necrotic cells in a heparan sulfate-dependent pathway. This process can be regulated by the presence of certain HRG ligands such as heparin and zinc ions. Binds to IgG subclasses of immunoglobins containing kappa and lambda light chains with different affinities regulating their clearance and inhibiting the formation of insoluble immune complexes. Tethers plasminogen to the cell surface. Binds T-cells and alters the cell morphology. Modulates angiogenesis by blocking the CD6-mediated antiangiongenic effect of thrombospondins, THBS1 and THBS2. The chain is Histidine-rich glycoprotein (Hrg) from Rattus norvegicus (Rat).